A 455-amino-acid polypeptide reads, in one-letter code: Golgi pH regulator (455 aa).

The next 5 membrane-spanning stretches (helical) occupy residues 5–25 (IDSSIMITSQILFFGFGWLFF), 46–66 (VTFAFSCTMFELIIFEILGVL), 79–99 (LCVILLILVFMVPFYIGYFIV), 114–134 (CLLWLTFMYFFWKLGDPFPIL), and 150–170 (VGVIGVTLMALLSGFGAVNCP). N-linked (GlcNAc...) asparagine glycans are attached at residues N180 and N243. Transmembrane regions (helical) follow at residues 290–310 (GYFFSIYCVWKIFMATINIVF), 343–363 (ISFILVGIIIVTSIRGLLITL), 378–398 (VIVLLLAQIMGMYFVSSVLLI), and 425–445 (WFDVIFLVSALSSILFLYLAH).

This sequence belongs to the Golgi pH regulator (TC 1.A.38) family. In terms of assembly, homotrimer. Interacts with RABL3; the interaction stabilizes GPR89A.

It localises to the golgi apparatus membrane. The catalysed reaction is iodide(out) = iodide(in). It catalyses the reaction chloride(in) = chloride(out). It carries out the reaction bromide(in) = bromide(out). The enzyme catalyses fluoride(in) = fluoride(out). In terms of biological role, voltage-gated channel that enables the transfer of monoatomic anions such as iodide, chloride, bromide and fluoride which may function in counter-ion conductance and participates in Golgi acidification. Plays a role in lymphocyte development, probably by acting as a RABL3 effector in hematopoietic cells. This is Golgi pH regulator from Bos taurus (Bovine).